Consider the following 190-residue polypeptide: Elongation factor P 2 (190 aa).

It belongs to the elongation factor P family.

Its subcellular location is the cytoplasm. It participates in protein biosynthesis; polypeptide chain elongation. In terms of biological role, involved in peptide bond synthesis. Stimulates efficient translation and peptide-bond synthesis on native or reconstituted 70S ribosomes in vitro. Probably functions indirectly by altering the affinity of the ribosome for aminoacyl-tRNA, thus increasing their reactivity as acceptors for peptidyl transferase. In Chlamydia trachomatis serovar D (strain ATCC VR-885 / DSM 19411 / UW-3/Cx), this protein is Elongation factor P 2 (efp2).